The sequence spans 559 residues: MNLNNEPIRAKRGTALTAKGWVQEAALRMLMNNLDEEVAEHPDQLVVYGGIGKAARNWPSYHSIVSSLTTLDNDETLLIQSGKPVAVFKTHEDAPRVLLANSNLVPAWANWETFHELDKKGLTMYGQMTAGSWIYIGSQGIVQGTYETFAECARQHFGGSLKGTITVTAGLGGMGGAQPLAVTMANGVAICVDVDRSRIDKRMETNYLDIVAHTLTEAIEEAELAKKEGIPLSIGLVGNAAEVLPEMLDRGFVPDIVTDQTSAHDPLNGYLPKGFTNEQGQVLRREDPQAYISLAKKSMAEQVEAMLELKKRGAIVFDYGNNIRQVAFDEGIRDAFSFPGFVPAYIRPQFCEGKGPFRWVALSGDPADIDKTDEVILQEFADNEPLCQWIRMARRHISFQGLPARICWLGYGERARFGKRINEMVASGELSAPIVIGRDHLDAGSVASPNRETEAMKDGSDAVADWPILNALVNTAAGASWVSVHHGGGVGMGYSLHAGMVVVADGTAEAARRLERVLTTDPGLGVVRHADAGYQKAIETAKATGIVIPALAREGKENG.

Residues G49–G50, Q127, G173–G175, D193, R198, N239–A240, Q260–H264, Y270–L271, and Y319 contribute to the NAD(+) site. C407 is an active-site residue. G489 is an NAD(+) binding site.

The protein belongs to the urocanase family. Requires NAD(+) as cofactor.

It localises to the cytoplasm. It carries out the reaction 4-imidazolone-5-propanoate = trans-urocanate + H2O. The protein operates within amino-acid degradation; L-histidine degradation into L-glutamate; N-formimidoyl-L-glutamate from L-histidine: step 2/3. In terms of biological role, catalyzes the conversion of urocanate to 4-imidazolone-5-propionate. The polypeptide is Urocanate hydratase (Shouchella clausii (strain KSM-K16) (Alkalihalobacillus clausii)).